The chain runs to 217 residues: Large ribosomal subunit protein uL3 (217 aa).

Polar residues predominate over residues 134-146; the sequence is GRATHGNSRSHNV. A disordered region spans residues 134-154; it reads GRATHGNSRSHNVPGSIGMAQ. The residue at position 154 (glutamine 154) is an N5-methylglutamine.

Belongs to the universal ribosomal protein uL3 family. Part of the 50S ribosomal subunit. Forms a cluster with proteins L14 and L19. Methylated by PrmB.

Functionally, one of the primary rRNA binding proteins, it binds directly near the 3'-end of the 23S rRNA, where it nucleates assembly of the 50S subunit. This chain is Large ribosomal subunit protein uL3, found in Burkholderia lata (strain ATCC 17760 / DSM 23089 / LMG 22485 / NCIMB 9086 / R18194 / 383).